The chain runs to 294 residues: Probable ABC transporter permease protein YqgI (294 aa).

6 helical membrane-spanning segments follow: residues 14-34, 66-86, 99-121, 126-148, 190-210, and 260-280; these read FGLCAAIIAAILVGLFSYIII, FYILFITMLITIPLGVGGGVF, FIRTCIEVLSSLPSIVIGMFGLL, LTGWGYTIIGGALALTVFNLPVM, IITGAILASGRVFGEAAALLF, and AIANGGSAVLVISVLVFNLAA. The ABC transmembrane type-1 domain occupies 62-280; sequence LFNSFYILFI…ISVLVFNLAA (219 aa).

Belongs to the binding-protein-dependent transport system permease family. CysTW subfamily.

It is found in the cell membrane. Part of the binding-protein-dependent transport system YqgGHIJK. Probably responsible for the translocation of the substrate across the membrane. The chain is Probable ABC transporter permease protein YqgI (yqgI) from Bacillus subtilis (strain 168).